We begin with the raw amino-acid sequence, 807 residues long: cAMP-regulated phosphoprotein 21 (807 aa).

The interval 1–127 (MSEQGGLTPT…KNREKLSERP (127 aa)) is disordered. Position 2 is an N-acetylserine (Ser2). Ser32 carries the phosphoserine modification. Residues 32–57 (SLDEEEKLELQRRLAAQNQERRKSKS) adopt a coiled-coil conformation. Ser55 is modified (phosphoserine; by PKA). Polar residues predominate over residues 89-98 (IHLQLSSFPS). Basic and acidic residues predominate over residues 101–127 (EEDKSRKDDSEREKEKDKNREKLSERP). A Phosphoserine modification is found at Ser133. Residues 163 to 226 (RMILLKMEQE…SVIINKTSST (64 aa)) enclose the R3H domain. An SUZ domain is found at 227 to 298 (RIPEQRFCEH…VRERIFAHDS (72 aa)). The segment at 245-282 (SQKRFILKRDNSSIDKEDNQNRMHPFRDDRRSKSIEER) is disordered. Residues Asn265 and Ser298 each carry the phosphoserine modification. Disordered stretches follow at residues 328–434 (LFRA…TSSV), 474–536 (GSIL…QPQM), 552–576 (SQLSMSRQSSGDTPEPPSGTVYPAS), and 595–627 (QLSTGGFSDSGPPISQQVLQAPPSPQGFVQQPP). The segment covering 337-348 (GRTSGSRQSSSE) has biased composition (low complexity). Residues 349–358 (TELRWPDHQR) are compositionally biased toward basic and acidic residues. A compositionally biased stretch (polar residues) spans 359–380 (AWSSTDSDSSNRNLKPTMTKTA). Ser361 and Ser381 each carry phosphoserine. The segment covering 401–421 (GKLSKTGSESSSSAGSSGSLS) has biased composition (low complexity). A compositionally biased stretch (polar residues) spans 422–434 (RTHPQSTALTSSV). Pro residues predominate over residues 514-524 (QQPPQQQPSPQ). Low complexity predominate over residues 525 to 535 (PQQQVQASQPQ). Composition is skewed to polar residues over residues 552 to 563 (SQLSMSRQSSGD) and 595 to 613 (QLSTGGFSDSGPPISQQVL). Ser557 is modified (phosphoserine). Arg650 is subject to Asymmetric dimethylarginine.

As to quaternary structure, interacts with CALM1. Post-translationally, phosphorylation of isoform 2 at Ser-55 is enhanced upon dopamine D1 receptor activation and favors interaction with CALM1. In terms of processing, methylated by CARM1 at Arg-650 in immature thymocytes. As to expression, present at high levels in thymus and low levels in brain. In thymus, isoform 1 is specifically found in immature thymocytes (at protein level).

It is found in the cytoplasm. Functionally, may act as a competitive inhibitor of calmodulin-dependent enzymes such as calcineurin in neurons. The polypeptide is cAMP-regulated phosphoprotein 21 (Arpp21) (Mus musculus (Mouse)).